The chain runs to 178 residues: Inorganic pyrophosphatase (178 aa).

Residues Lys-30, Arg-44, and Tyr-56 each contribute to the substrate site. Residues Asp-66, Asp-71, and Asp-103 each coordinate Mg(2+). Tyr-140 lines the substrate pocket.

It belongs to the PPase family. Homohexamer. Mg(2+) is required as a cofactor.

Its subcellular location is the cytoplasm. The catalysed reaction is diphosphate + H2O = 2 phosphate + H(+). Catalyzes the hydrolysis of inorganic pyrophosphate (PPi) forming two phosphate ions. In Pyrococcus furiosus (strain ATCC 43587 / DSM 3638 / JCM 8422 / Vc1), this protein is Inorganic pyrophosphatase.